A 510-amino-acid polypeptide reads, in one-letter code: Glycerol kinase (510 aa).

Thr14 provides a ligand contact to ADP. ATP-binding residues include Thr14 and Thr15. Thr14 is a sn-glycerol 3-phosphate binding site. Residue Arg18 participates in ADP binding. 4 residues coordinate sn-glycerol 3-phosphate: Arg84, Glu85, Tyr136, and Asp256. Residues Arg84, Glu85, Tyr136, Asp256, and Gln257 each coordinate glycerol. Residues Thr278, Gly322, Gly422, and Asn426 each coordinate ADP. The ATP site is built by Thr278, Gly322, and Gly422.

The protein belongs to the FGGY kinase family.

The enzyme catalyses glycerol + ATP = sn-glycerol 3-phosphate + ADP + H(+). The protein operates within polyol metabolism; glycerol degradation via glycerol kinase pathway; sn-glycerol 3-phosphate from glycerol: step 1/1. Key enzyme in the regulation of glycerol uptake and metabolism. Catalyzes the phosphorylation of glycerol to yield sn-glycerol 3-phosphate. It also catalyzes the phosphorylation of dihydroxyacetone (DHA). Involved, together with the DHA kinase DhaKLM, in the metabolism of DHA. The polypeptide is Glycerol kinase (Haloferax volcanii (strain ATCC 29605 / DSM 3757 / JCM 8879 / NBRC 14742 / NCIMB 2012 / VKM B-1768 / DS2) (Halobacterium volcanii)).